We begin with the raw amino-acid sequence, 374 residues long: Aminomethyltransferase (374 aa).

This sequence belongs to the GcvT family. As to quaternary structure, the glycine cleavage system is composed of four proteins: P, T, L and H.

The catalysed reaction is N(6)-[(R)-S(8)-aminomethyldihydrolipoyl]-L-lysyl-[protein] + (6S)-5,6,7,8-tetrahydrofolate = N(6)-[(R)-dihydrolipoyl]-L-lysyl-[protein] + (6R)-5,10-methylene-5,6,7,8-tetrahydrofolate + NH4(+). In terms of biological role, the glycine cleavage system catalyzes the degradation of glycine. The polypeptide is Aminomethyltransferase (Edwardsiella ictaluri (strain 93-146)).